The following is a 462-amino-acid chain: Putative endoglucanase type B (462 aa).

The signal sequence occupies residues 1–16 (MAYKLILAAFAATALA). The region spanning 25–61 (CSNGVWAQCGGQNWSGTPCCTSGNKCVKLNDFYSQCQ) is the CBM1 domain. Disulfide bonds link Cys-33–Cys-50 and Cys-44–Cys-60. Asn-37 carries N-linked (GlcNAc...) asparagine glycosylation. Positions 64–100 (SAEPSSTAAGPSSTTATKTTATGGSSTTAGGSVTSAP) are enriched in low complexity. The interval 64–102 (SAEPSSTAAGPSSTTATKTTATGGSSTTAGGSVTSAPPA) is disordered. A linker region spans residues 66–99 (EPSSTAAGPSSTTATKTTATGGSSTTAGGSVTSA). Positions 100 to 462 (PPAASDNPYA…LLDNANPSFL (363 aa)) are catalytic. Residue Asp-190 is part of the active site. A disulfide bond links Cys-191 and Cys-250. An N-linked (GlcNAc...) asparagine glycan is attached at Asn-223. Asp-236 functions as the Proton donor in the catalytic mechanism. N-linked (GlcNAc...) asparagine glycans are attached at residues Asn-272 and Asn-317. Cys-383 and Cys-430 are oxidised to a cystine. The Nucleophile role is filled by Asp-416.

It belongs to the glycosyl hydrolase 6 (cellulase B) family.

The enzyme catalyses Endohydrolysis of (1-&gt;4)-beta-D-glucosidic linkages in cellulose, lichenin and cereal beta-D-glucans.. The polypeptide is Putative endoglucanase type B (Fusarium oxysporum (Fusarium vascular wilt)).